The following is a 252-amino-acid chain: Expansin-A12 (252 aa).

The signal sequence occupies residues 1–23; the sequence is MDMKGTYLVTVILLVSTLSVGMC. The Expansin-like EG45 domain maps to 45-156; it reads GGACGYDNPY…RRVGCKRRGG (112 aa). Residues 166–246 form the Expansin-like CBD domain; sequence NFNMVMISNV…SWWFGQTFSS (81 aa).

The protein belongs to the expansin family. Expansin A subfamily.

The protein localises to the secreted. Its subcellular location is the cell wall. The protein resides in the membrane. Its function is as follows. Causes loosening and extension of plant cell walls by disrupting non-covalent bonding between cellulose microfibrils and matrix glucans. No enzymatic activity has been found. This chain is Expansin-A12 (EXPA12), found in Arabidopsis thaliana (Mouse-ear cress).